Here is a 420-residue protein sequence, read N- to C-terminus: Hemojuvelin (420 aa).

The signal sequence occupies residues 1-32; sequence MGQSPSPRSPHGSPPTLSTLTLLLLLCGQAHS. Position 43 is a phosphotyrosine (Y43). N-linked (GlcNAc...) asparagine glycosylation occurs at N111. Residues 113–135 form a disordered region; the sequence is SRQGPTAPPPARGPALPGAGPAP. The segment covering 125 to 134 has biased composition (low complexity); that stretch reads GPALPGAGPA. Cystine bridges form between C141–C223 and C160–C310. Residues N206 and N365 are each glycosylated (N-linked (GlcNAc...) asparagine). D393 carries the GPI-anchor amidated aspartate lipid modification. Residues 394 to 420 constitute a propeptide, removed in mature form; that stretch reads AGPPLSPAICLVPLLSALFVLWLCFSK.

It belongs to the repulsive guidance molecule (RGM) family. As to quaternary structure, interacts with BMP2 and BMP4. Interacts with BMP6. Interacts with BMPR1B. Interacts with TMPRSS6. Post-translationally, autocatalytically cleaved at low pH; the two chains remain linked via two disulfide bonds. Also proteolytically processed by TMPRSS6, several fragments being released in the extracellular space; regulates HJV activity in BMP signaling and thefore iron homeostasis. Muscle cell lineage.

Its subcellular location is the cell membrane. In terms of biological role, acts as a bone morphogenetic protein (BMP) coreceptor. Through enhancement of BMP signaling regulates hepcidin (HAMP) expression and regulates iron homeostasis. In Mus musculus (Mouse), this protein is Hemojuvelin.